The sequence spans 744 residues: Phosphoribosylformylglycinamidine synthase subunit PurL (744 aa).

Histidine 45 is a catalytic residue. Residues tyrosine 48 and lysine 87 each coordinate ATP. Position 89 (glutamate 89) interacts with Mg(2+). Substrate contacts are provided by residues 90–93 (SHNH) and arginine 112. The active-site Proton acceptor is histidine 91. Residue aspartate 113 participates in Mg(2+) binding. Substrate is bound at residue glutamine 236. Aspartate 264 contributes to the Mg(2+) binding site. 308–310 (ESQ) provides a ligand contact to substrate. 2 residues coordinate ATP: asparagine 492 and glycine 529. Asparagine 530 provides a ligand contact to Mg(2+). A substrate-binding site is contributed by serine 532.

The protein belongs to the FGAMS family. As to quaternary structure, monomer. Part of the FGAM synthase complex composed of 1 PurL, 1 PurQ and 2 PurS subunits.

Its subcellular location is the cytoplasm. It catalyses the reaction N(2)-formyl-N(1)-(5-phospho-beta-D-ribosyl)glycinamide + L-glutamine + ATP + H2O = 2-formamido-N(1)-(5-O-phospho-beta-D-ribosyl)acetamidine + L-glutamate + ADP + phosphate + H(+). The protein operates within purine metabolism; IMP biosynthesis via de novo pathway; 5-amino-1-(5-phospho-D-ribosyl)imidazole from N(2)-formyl-N(1)-(5-phospho-D-ribosyl)glycinamide: step 1/2. In terms of biological role, part of the phosphoribosylformylglycinamidine synthase complex involved in the purines biosynthetic pathway. Catalyzes the ATP-dependent conversion of formylglycinamide ribonucleotide (FGAR) and glutamine to yield formylglycinamidine ribonucleotide (FGAM) and glutamate. The FGAM synthase complex is composed of three subunits. PurQ produces an ammonia molecule by converting glutamine to glutamate. PurL transfers the ammonia molecule to FGAR to form FGAM in an ATP-dependent manner. PurS interacts with PurQ and PurL and is thought to assist in the transfer of the ammonia molecule from PurQ to PurL. The protein is Phosphoribosylformylglycinamidine synthase subunit PurL of Erythrobacter litoralis (strain HTCC2594).